We begin with the raw amino-acid sequence, 648 residues long: Biosynthetic arginine decarboxylase (648 aa).

Lys109 is modified (N6-(pyridoxal phosphate)lysine). 291 to 301 (IDVGGGLGIDF) serves as a coordination point for substrate.

This sequence belongs to the Orn/Lys/Arg decarboxylase class-II family. SpeA subfamily. Requires Mg(2+) as cofactor. Pyridoxal 5'-phosphate serves as cofactor.

It catalyses the reaction L-arginine + H(+) = agmatine + CO2. It participates in amine and polyamine biosynthesis; agmatine biosynthesis; agmatine from L-arginine: step 1/1. In terms of biological role, catalyzes the biosynthesis of agmatine from arginine. The sequence is that of Biosynthetic arginine decarboxylase from Prochlorococcus marinus (strain AS9601).